An 856-amino-acid chain; its full sequence is PR domain zinc finger protein 1 (856 aa).

The 119-residue stretch at Pro-115–Cys-233 folds into the SET domain. 2 disordered regions span residues Thr-357–Leu-399 and Gly-532–Ala-571. Composition is skewed to low complexity over residues Ser-373–Ser-393 and Ser-542–Ser-556. An interaction with PIAS1 region spans residues His-558–Lys-605. 4 consecutive C2H2-type zinc fingers follow at residues Tyr-606 to His-628, Phe-634 to His-656, His-662 to His-684, and Tyr-690 to His-712. Lys-847 participates in a covalent cross-link: Glycyl lysine isopeptide (Lys-Gly) (interchain with G-Cter in SUMO1); alternate. Residue Lys-847 forms a Glycyl lysine isopeptide (Lys-Gly) (interchain with G-Cter in SUMO2); alternate linkage.

It belongs to the class V-like SAM-binding methyltransferase superfamily. In terms of assembly, interacts with PRMT5. Interacts with FBXO10. Interacts with FBXO11. Interacts with multiple nuclear sumoylation E3 ligases, including CBX4, PIAS1, PIAS2, PIAS3, PIAS4, PML and RNF4, but not RANBP2. Interacts with LDB1, SMARCD3 and SMARCC1. Interacts with EEIG1; following TNFSF11/RANKL stimulation in bone marrow-derived macrophages, the interaction promotes the binding of PRDM1/BLIMP1 to the gene promoter of IRF8. In terms of processing, sumoylation at Lys-847 by PIAS1 increases transcriptional repressor activity, and is critical for plasma cell differentiation. Can be sumoylated with SUMO1 and SUMO2 by PML. Degradation of the wild-type protein mostly depends upon sumoylation, rather than ubiquitination. Desumoylated by SENP1 and SENP6. Ubiquitinated by SCF(FBXO11), leading to its degradation by the proteasome. As to expression, expressed in bone marrow macrophages (at protein level). Expressed in innate lymphocytes, including tissue-resident conventional natural killer (cNK) cells in liver. Expressed also weakly in tissue-resident natural killer (trNK) and natural killer T (NKT) cells in liver. In terms of tissue distribution, expressed in bone marrow, spleen and lymph node but not in brain, heart, kidney, liver, ovary or muscle. Weak expression detected in the lung. Expressed only in the yolk sac. As to expression, expressed in embryo, yolk sac, placenta, splenocytes, and activated T-cells.

It is found in the nucleus. The protein resides in the cytoplasm. Functionally, transcription factor that mediates a transcriptional program in various innate and adaptive immune tissue-resident lymphocyte T cell types such as tissue-resident memory T (Trm), natural killer (trNK) and natural killer T (NKT) cells and negatively regulates gene expression of proteins that promote the egress of tissue-resident T-cell populations from non-lymphoid organs. Plays a role in the development, retention and long-term establishment of adaptive and innate tissue-resident lymphocyte T cell types in non-lymphoid organs, such as the skin and gut, but also in other nonbarrier tissues like liver and kidney, and therefore may provide immediate immunological protection against reactivating infections or viral reinfection. Binds specifically to the PRDI element in the promoter of the beta-interferon gene. Drives the maturation of B-lymphocytes into Ig secreting cells. Associates with the transcriptional repressor ZNF683 to chromatin at gene promoter regions. Binds to the promoter and acts as a transcriptional repressor of IRF8, thereby promotes transcription of osteoclast differentiation factors such as NFATC1 and EEIG1. In Mus musculus (Mouse), this protein is PR domain zinc finger protein 1 (Prdm1).